We begin with the raw amino-acid sequence, 236 residues long: Ribose-5-phosphate isomerase A (236 aa).

Residues 33–36 (TGST), 90–93 (DGAD), and 103–106 (KGGG) each bind substrate. Glu112 (proton acceptor) is an active-site residue. Lys130 lines the substrate pocket.

This sequence belongs to the ribose 5-phosphate isomerase family. As to quaternary structure, homodimer.

The enzyme catalyses aldehydo-D-ribose 5-phosphate = D-ribulose 5-phosphate. It functions in the pathway carbohydrate degradation; pentose phosphate pathway; D-ribose 5-phosphate from D-ribulose 5-phosphate (non-oxidative stage): step 1/1. Functionally, catalyzes the reversible conversion of ribose-5-phosphate to ribulose 5-phosphate. This chain is Ribose-5-phosphate isomerase A, found in Trichormus variabilis (strain ATCC 29413 / PCC 7937) (Anabaena variabilis).